A 138-amino-acid polypeptide reads, in one-letter code: Large ribosomal subunit protein uL16 (138 aa).

Over residues 1–16 the composition is skewed to basic residues; it reads MLIPKRVKYRRQHRPT. Residues 1-23 are disordered; that stretch reads MLIPKRVKYRRQHRPTRSGISKG.

This sequence belongs to the universal ribosomal protein uL16 family. In terms of assembly, part of the 50S ribosomal subunit.

In terms of biological role, binds 23S rRNA and is also seen to make contacts with the A and possibly P site tRNAs. In Corynebacterium glutamicum (strain R), this protein is Large ribosomal subunit protein uL16.